Reading from the N-terminus, the 733-residue chain is Cyclic nucleotide-gated channel (733 aa).

Disordered regions lie at residues 1–33 (MSTA…PTAS) and 67–95 (PNGN…IEVP). Over 1–125 (MSTAEPAPDP…PSTDNFYYWT (125 aa)) the chain is Cytoplasmic. Over residues 12–25 (NPSTSGLAPTTNGI) the composition is skewed to polar residues. Residues 126-148 (CVVTVAYIYNLLFVIARQVFNDL) form a helical membrane-spanning segment. The Extracellular portion of the chain corresponds to 149–197 (IGPSSQSLCRFYNGTLNSTTQVECTYNMLTNMKEMPTYSQYPDLGWSKY). A helical transmembrane segment spans residues 198 to 217 (WHFRMLWVFFDLLMDCVYLI). Over 218 to 251 (DTFLNYRMGYMDQGLVVREAEKVTKAYWQSKQYR) the chain is Cytoplasmic. A helical transmembrane segment spans residues 252 to 265 (IDGISLIPLDYILG). Residues 266-276 (WPIPYINWRGL) lie on the Extracellular side of the membrane. Residues 277–287 (PILRLNRLIRY) traverse the membrane as a helical segment. Topologically, residues 288–308 (KRVRNCLERTETRSSMPNAFR) are cytoplasmic. Residues 309 to 331 (VVVVVWYIVIIIHWNACLYFWIS) traverse the membrane as a helical segment. Topologically, residues 332-362 (EWIGLGTDAWVYGHLNKQSLPDDITDTLLRR) are extracellular. The next 2 membrane-spanning stretches (helical) occupy residues 363 to 385 (YVYS…SPVR) and 386 to 411 (NIEY…GNVG). Positions 376 to 379 (TIGE) are selectivity filter. Glu-379 is a Na(+) binding site. Topologically, residues 412-733 (SMISNMSAAR…TGTESESLLK (322 aa)) are cytoplasmic. Residues 419–496 (AARTEFQNKM…TLRKVRIFQD (78 aa)) form a C-linker region. A cyclic nucleotide-binding domain region spans residues 493–607 (IFQDCEAGLL…ALREYPDARK (115 aa)). 3',5'-cyclic GMP is bound at residue Gly-559. Glu-560 provides a ligand contact to 3',5'-cyclic AMP. Positions 562, 575, 576, 619, and 620 each coordinate 3',5'-cyclic GMP. A 3',5'-cyclic AMP-binding site is contributed by Arg-575. The tract at residues 694-733 (SIDGGDISTDGVDERVRPPRLRQTKTIDLPTGTESESLLK) is disordered.

It belongs to the cyclic nucleotide-gated cation channel (TC 1.A.1.5) family. In terms of assembly, homotetramer. In terms of tissue distribution, expressed at the sensory endings of thermosensory, gustatory, and olfactory neurons.

It is found in the cell membrane. The protein resides in the cell projection. Its subcellular location is the cilium. It catalyses the reaction Ca(2+)(in) = Ca(2+)(out). It carries out the reaction Na(+)(in) = Na(+)(out). The catalysed reaction is K(+)(in) = K(+)(out). Functionally, pore-forming subunit of the cyclic nucleotide-gated channel. Required for normal thermosensation and chemosensation sensory behavior. Required, downstream of receptor-type guanylate cyclase gcy-9, for CO2-mediated responses in BAG neurons. Required, downstream of receptor-type guanylate cyclase gcy-14, for alkaline pH-mediated responses in ASE-left (ASEL) neurons. Involved in the development of ASJ sensory neuron axon during late larval stages and in the maintenance of normal axon morphology in the adult. Regulates dauer formation. Required for the calcium flux to the cytoplasm in the ASJ sensory neurons upon the onset and removal of a nitric oxide (NO) stimulus, thereby promoting the ASJ-mediated behavioral avoidance response to NO-producing organisms like P.aeruginosa. In ASI and ASJ sensory neurons, controls behavioral response to P.aeruginosa by up-regulating the transcription of daf-7, a member of the TGF-beta family. In AWB and AWC sensory neurons, mediates the recognition of food odors which subsequently allows for the detection of preferred food sources. In AWC neurons, acts to promote expression of srsx-3, a member of the GPCR family. Binding to cGMP results in conformational changes at the hydrophobic gate that converts the protein from an inactive closed state to an active open state. The sequence is that of Cyclic nucleotide-gated channel (tax-4) from Caenorhabditis elegans.